We begin with the raw amino-acid sequence, 457 residues long: Mannose-6-phosphate isomerase (457 aa).

Zn(2+)-binding residues include Gln108, His110, Glu135, and His292. Residue Arg311 is part of the active site.

This sequence belongs to the mannose-6-phosphate isomerase type 1 family. Zn(2+) is required as a cofactor.

Its subcellular location is the cytoplasm. The enzyme catalyses D-mannose 6-phosphate = D-fructose 6-phosphate. Its pathway is nucleotide-sugar biosynthesis; GDP-alpha-D-mannose biosynthesis; alpha-D-mannose 1-phosphate from D-fructose 6-phosphate: step 1/2. Functionally, involved in the synthesis of the GDP-mannose and dolichol-phosphate-mannose required for a number of critical mannosyl transfer reactions. This is Mannose-6-phosphate isomerase (pmi1) from Aspergillus fumigatus (strain ATCC MYA-4609 / CBS 101355 / FGSC A1100 / Af293) (Neosartorya fumigata).